Here is a 132-residue protein sequence, read N- to C-terminus: MGSLMLLFVETTRNSSACIFPVILNELSSTVETITHFPEVTDGECVFPFHYKNGTYYDCIKSKARHKWCSLNKTYEGYWKFCSAEDFANCVFPFWYRRLIYWECTDDGEAFGKKWCSLTKNFNKDRIWKYCE.

Residues 1–17 (MGSLMLLFVETTRNSSA) form the signal peptide. 2 Fibronectin type-II domains span residues 40-84 (VTDG…FCSA) and 85-132 (EDFA…KYCE). Cystine bridges form between C45–C69, C59–C82, C90–C116, and C104–C131. N-linked (GlcNAc...) asparagine glycosylation is present at N53.

This sequence belongs to the seminal plasma protein family. Expressed only in the epididymis.

Its subcellular location is the secreted. Functionally, binds sperm in vitro and promotes sperm capacitation. Specifically promotes capacitation induced by high density lipoproteins (HDLs). Also binds heparin, phospholipid liposomes, and weakly to gelatin. Does not bind chondroitin sulfate B. This chain is Binder of sperm protein homolog 1 (BSPH1), found in Homo sapiens (Human).